Consider the following 468-residue polypeptide: Hexokinase (468 aa).

A Hexokinase domain is found at Ala10–Asp466. The segment at Thr74–Val225 is hexokinase small subdomain. Asp85–Thr90 contacts ATP. Positions Pro163–Phe189 are glucose-binding. Positions Asn226–Asp455 are hexokinase large subdomain.

It belongs to the hexokinase family.

The enzyme catalyses a D-hexose + ATP = a D-hexose 6-phosphate + ADP + H(+). It carries out the reaction D-mannose + ATP = D-mannose 6-phosphate + ADP + H(+). It catalyses the reaction D-fructose + ATP = D-fructose 6-phosphate + ADP + H(+). The catalysed reaction is D-glucose + ATP = D-glucose 6-phosphate + ADP + H(+). The protein operates within carbohydrate metabolism; hexose metabolism. It functions in the pathway carbohydrate degradation; glycolysis; D-glyceraldehyde 3-phosphate and glycerone phosphate from D-glucose: step 1/4. In terms of biological role, catalyzes the phosphorylation of various hexoses to hexose 6-phosphate. In Toxoplasma gondii, this protein is Hexokinase (HXK).